A 428-amino-acid chain; its full sequence is Light-independent protochlorophyllide reductase subunit N (428 aa).

[4Fe-4S] cluster is bound by residues cysteine 29, cysteine 54, and cysteine 115.

Belongs to the BchN/ChlN family. In terms of assembly, protochlorophyllide reductase is composed of three subunits; BchL, BchN and BchB. Forms a heterotetramer of two BchB and two BchN subunits. Requires [4Fe-4S] cluster as cofactor.

It catalyses the reaction chlorophyllide a + oxidized 2[4Fe-4S]-[ferredoxin] + 2 ADP + 2 phosphate = protochlorophyllide a + reduced 2[4Fe-4S]-[ferredoxin] + 2 ATP + 2 H2O. The protein operates within porphyrin-containing compound metabolism; bacteriochlorophyll biosynthesis (light-independent). Functionally, component of the dark-operative protochlorophyllide reductase (DPOR) that uses Mg-ATP and reduced ferredoxin to reduce ring D of protochlorophyllide (Pchlide) to form chlorophyllide a (Chlide). This reaction is light-independent. The NB-protein (BchN-BchB) is the catalytic component of the complex. This chain is Light-independent protochlorophyllide reductase subunit N, found in Cereibacter sphaeroides (strain ATCC 17025 / ATH 2.4.3) (Rhodobacter sphaeroides).